Here is a 401-residue protein sequence, read N- to C-terminus: Acetate kinase (401 aa).

Position 9 (asparagine 9) interacts with Mg(2+). Lysine 16 is a binding site for ATP. Residue arginine 88 coordinates substrate. Aspartate 147 serves as the catalytic Proton donor/acceptor. ATP is bound by residues 207 to 211 (HLGNG), 282 to 284 (DCR), and 333 to 337 (GIGEN). Mg(2+) is bound at residue glutamate 388.

It belongs to the acetokinase family. As to quaternary structure, homodimer. Mg(2+) serves as cofactor. Requires Mn(2+) as cofactor.

Its subcellular location is the cytoplasm. The enzyme catalyses acetate + ATP = acetyl phosphate + ADP. The protein operates within metabolic intermediate biosynthesis; acetyl-CoA biosynthesis; acetyl-CoA from acetate: step 1/2. Catalyzes the formation of acetyl phosphate from acetate and ATP. Can also catalyze the reverse reaction. The sequence is that of Acetate kinase from Haemophilus influenzae (strain PittGG).